The primary structure comprises 497 residues: MCELYSKQETLALRRKHIGPSCKVFFAADPIKIVRAQRQYMFDEKGDQYLDCINNVAHVGHCHPEVVKAAQKQMELLNTNSRFLHDNIVEYAKRLSATLPDRLSVCYFTNSGSEANDLALRLARQFRGHQDVITLDHAYHGHLSSLIEISPYKFQKGKDVKKEFVHVAPAPDTYRGKYREDHVDPASAYADEVKKIIDEAHNSGRKIAAFIAESMQSCGGQIIPPAGYFQKVAEYVRGAGGVFIADEVQVGFGRVGKHFWSFQMFGEDFVPDIVTMGKPMGNGHPMACVVTTKEIAEAFSASGMEYFNTYGGNPVSSAVGLAVLDVIKNEDLQGNATRVGNYLTELLNKQKTKHTLIGDIRGVGLFIGIDLVKDHQQRTPATAEAQHIIYKMKEKRVLLSADGPHRNVLKIKPPMCFTEEDAKFMVEQLDGILTGLEEATGAETESGISKNTPCRTKMPKEAQSELLRDSSLESRENPSQKRNGLCTDSLLSKRLRT.

Lysine 278 carries the N6-(pyridoxal phosphate)lysine modification. Residues 440-497 (TGAETESGISKNTPCRTKMPKEAQSELLRDSSLESRENPSQKRNGLCTDSLLSKRLRT) are disordered. Over residues 458–479 (MPKEAQSELLRDSSLESRENPS) the composition is skewed to basic and acidic residues.

Belongs to the class-III pyridoxal-phosphate-dependent aminotransferase family. As to quaternary structure, homotetramer. It depends on pyridoxal 5'-phosphate as a cofactor.

Its subcellular location is the mitochondrion. The enzyme catalyses phosphoethanolamine + H2O = acetaldehyde + NH4(+) + phosphate. In terms of biological role, catalyzes the pyridoxal-phosphate-dependent breakdown of phosphoethanolamine, converting it to ammonia, inorganic phosphate and acetaldehyde. The protein is Ethanolamine-phosphate phospho-lyase (ETNPPL) of Bos taurus (Bovine).